Consider the following 130-residue polypeptide: Spore coat protein M (130 aa).

Involved in spore outer coat assembly. May be part of a cross-linked insoluble skeleton that surrounds the spore, serves as a matrix for the assembly of additional outer coat material, and confers structural stability to the final structure. The polypeptide is Spore coat protein M (cotM) (Bacillus subtilis (strain 168)).